The following is a 387-amino-acid chain: Phosphoglycerate kinase (387 aa).

Substrate-binding positions include 21-23 (DLN), Arg36, 59-62 (HLGR), Arg113, and Arg146. ATP contacts are provided by residues Lys197, Glu314, and 340–343 (GGDT).

Belongs to the phosphoglycerate kinase family. As to quaternary structure, monomer.

The protein localises to the cytoplasm. The enzyme catalyses (2R)-3-phosphoglycerate + ATP = (2R)-3-phospho-glyceroyl phosphate + ADP. The protein operates within carbohydrate degradation; glycolysis; pyruvate from D-glyceraldehyde 3-phosphate: step 2/5. This chain is Phosphoglycerate kinase, found in Proteus mirabilis (strain HI4320).